A 295-amino-acid polypeptide reads, in one-letter code: uncharacterized protein (295 aa).

Residues Arg-151–Gly-290 form the Resolvase/invertase-type recombinase catalytic domain. Ser-159 (O-(5'-phospho-DNA)-serine intermediate) is an active-site residue.

This is an uncharacterized protein from Mycobacterium bovis (strain ATCC BAA-935 / AF2122/97).